The primary structure comprises 431 residues: MRLMTKLGFRALVASCLIAAGAAANAQVNVLITGVGSTQFPIATANFANEAGLPQQVTSIVRADLARSGKFTNIDAGSTPVPETASVDLGAWKAKGANAFVAGSVNREANGQYKVNFILYDTVKQQSLGGLSLTATDTTLRTAGHKIADYIYQKLLGVRGVFATRLSYVIKTGNRYQLQISDSDGQNARIALSSTEPIISPAWSPSGTKVAYVSFERKKPIVYIHDLPTGRRYMVSDQKGNNSAPAWSPDSNTLAVALSLTGNTQIYTVNANGGGLRRLTQSSSIDTEPYYSPDGRWIYFTSDRGGAPQIYRMPAQGESAGAAQRVTFTGSYNTSPRISPDGKLLAYISRTGGGFKLYVQDLQTGAANAITNTNRDESPSFAANGQYLLYATQSGGRNVLAAVPSDGSAPPQILSVQGGSVREPSWGPFMQ.

The first 26 residues, 1-26, serve as a signal peptide directing secretion; the sequence is MRLMTKLGFRALVASCLIAAGAAANA. The tract at residues 411–431 is disordered; that stretch reads PQILSVQGGSVREPSWGPFMQ.

The protein belongs to the TolB family. In terms of assembly, the Tol-Pal system is composed of five core proteins: the inner membrane proteins TolA, TolQ and TolR, the periplasmic protein TolB and the outer membrane protein Pal. They form a network linking the inner and outer membranes and the peptidoglycan layer.

The protein resides in the periplasm. Part of the Tol-Pal system, which plays a role in outer membrane invagination during cell division and is important for maintaining outer membrane integrity. The protein is Tol-Pal system protein TolB of Burkholderia ambifaria (strain ATCC BAA-244 / DSM 16087 / CCUG 44356 / LMG 19182 / AMMD) (Burkholderia cepacia (strain AMMD)).